The primary structure comprises 71 residues: Small ribosomal subunit protein bS18 (71 aa).

It belongs to the bacterial ribosomal protein bS18 family. As to quaternary structure, part of the 30S ribosomal subunit. Forms a tight heterodimer with protein bS6.

In terms of biological role, binds as a heterodimer with protein bS6 to the central domain of the 16S rRNA, where it helps stabilize the platform of the 30S subunit. The chain is Small ribosomal subunit protein bS18 from Thermosynechococcus vestitus (strain NIES-2133 / IAM M-273 / BP-1).